A 520-amino-acid polypeptide reads, in one-letter code: GMP synthase [glutamine-hydrolyzing] (520 aa).

The 193-residue stretch at 13-205 (KIIVLDYGSQ…ALNICKAKGD (193 aa)) folds into the Glutamine amidotransferase type-1 domain. Cys90 (nucleophile) is an active-site residue. Catalysis depends on residues His179 and Glu181. The GMPS ATP-PPase domain maps to 206-395 (WSMDNFIDMQ…LGMPDHIVWR (190 aa)). Position 233–239 (233–239 (SGGVDSS)) interacts with ATP.

As to quaternary structure, homodimer.

It carries out the reaction XMP + L-glutamine + ATP + H2O = GMP + L-glutamate + AMP + diphosphate + 2 H(+). It functions in the pathway purine metabolism; GMP biosynthesis; GMP from XMP (L-Gln route): step 1/1. In terms of biological role, catalyzes the synthesis of GMP from XMP. In Streptococcus pneumoniae (strain ATCC 700669 / Spain 23F-1), this protein is GMP synthase [glutamine-hydrolyzing].